Consider the following 213-residue polypeptide: Large ribosomal subunit protein uL3 (213 aa).

The protein belongs to the universal ribosomal protein uL3 family. Part of the 50S ribosomal subunit. Forms a cluster with proteins L14 and L19.

One of the primary rRNA binding proteins, it binds directly near the 3'-end of the 23S rRNA, where it nucleates assembly of the 50S subunit. This chain is Large ribosomal subunit protein uL3, found in Petrotoga mobilis (strain DSM 10674 / SJ95).